Here is a 159-residue protein sequence, read N- to C-terminus: 2-C-methyl-D-erythritol 2,4-cyclodiphosphate synthase (159 aa).

A divalent metal cation contacts are provided by Asp8 and His10. 4-CDP-2-C-methyl-D-erythritol 2-phosphate is bound by residues 8–10 (DVH) and 34–35 (HS). His42 provides a ligand contact to a divalent metal cation. 4-CDP-2-C-methyl-D-erythritol 2-phosphate is bound by residues 56 to 58 (DIG), 61 to 65 (FPDTD), 100 to 106 (AQAPKML), 132 to 135 (TTTE), Phe139, and Arg142.

It belongs to the IspF family. In terms of assembly, homotrimer. Requires a divalent metal cation as cofactor.

The enzyme catalyses 4-CDP-2-C-methyl-D-erythritol 2-phosphate = 2-C-methyl-D-erythritol 2,4-cyclic diphosphate + CMP. Its pathway is isoprenoid biosynthesis; isopentenyl diphosphate biosynthesis via DXP pathway; isopentenyl diphosphate from 1-deoxy-D-xylulose 5-phosphate: step 4/6. Involved in the biosynthesis of isopentenyl diphosphate (IPP) and dimethylallyl diphosphate (DMAPP), two major building blocks of isoprenoid compounds. Catalyzes the conversion of 4-diphosphocytidyl-2-C-methyl-D-erythritol 2-phosphate (CDP-ME2P) to 2-C-methyl-D-erythritol 2,4-cyclodiphosphate (ME-CPP) with a corresponding release of cytidine 5-monophosphate (CMP). The polypeptide is 2-C-methyl-D-erythritol 2,4-cyclodiphosphate synthase (Escherichia coli O81 (strain ED1a)).